The chain runs to 368 residues: Isopentenyl-diphosphate delta-isomerase (368 aa).

7–8 contributes to the substrate binding site; the sequence is RK. FMN contacts are provided by residues Thr-65, 66–68, Ser-96, and Asn-125; that span reads GMT. 96-98 lines the substrate pocket; it reads SQR. Gln-160 provides a ligand contact to substrate. Glu-161 provides a ligand contact to Mg(2+). Residues Lys-193, Ser-218, Thr-223, 275–277, and 296–297 contribute to the FMN site; these read GIR and AL.

The protein belongs to the IPP isomerase type 2 family. Homooctamer. Dimer of tetramers. FMN serves as cofactor. NADPH is required as a cofactor. The cofactor is Mg(2+).

The protein resides in the cytoplasm. It carries out the reaction isopentenyl diphosphate = dimethylallyl diphosphate. Involved in the biosynthesis of isoprenoids. Catalyzes the 1,3-allylic rearrangement of the homoallylic substrate isopentenyl (IPP) to its allylic isomer, dimethylallyl diphosphate (DMAPP). The polypeptide is Isopentenyl-diphosphate delta-isomerase (Saccharolobus islandicus (strain L.S.2.15 / Lassen #1) (Sulfolobus islandicus)).